Reading from the N-terminus, the 119-residue chain is Small ribosomal subunit protein bS16 (119 aa).

It belongs to the bacterial ribosomal protein bS16 family.

The sequence is that of Small ribosomal subunit protein bS16 from Chlamydia abortus (strain DSM 27085 / S26/3) (Chlamydophila abortus).